The chain runs to 34 residues: Histone H1, sperm (34 aa).

Positions proline 1–proline 34 are disordered. Residues alanine 9–proline 34 are compositionally biased toward basic residues.

It belongs to the histone H1/H5 family. As to expression, sperm.

It localises to the nucleus. The protein resides in the chromosome. Functionally, histones H1 are necessary for the condensation of nucleosome chains into higher-order structures. This Strongylocentrotus purpuratus (Purple sea urchin) protein is Histone H1, sperm.